Consider the following 308-residue polypeptide: D-alanine--D-alanine ligase (308 aa).

Residues 105-302 (KAIFRSLGLA…FPDLCERILD (198 aa)) enclose the ATP-grasp domain. 133–188 (DLPFGLPCVVKPAGEGSSVGVHLVNEAAELGPACRDAASHAGDVIVERYVKGTEVD) is a binding site for ATP. D256, E269, and N271 together coordinate Mg(2+).

It belongs to the D-alanine--D-alanine ligase family. Mg(2+) serves as cofactor. Mn(2+) is required as a cofactor.

The protein resides in the cytoplasm. The enzyme catalyses 2 D-alanine + ATP = D-alanyl-D-alanine + ADP + phosphate + H(+). It functions in the pathway cell wall biogenesis; peptidoglycan biosynthesis. Its function is as follows. Cell wall formation. The protein is D-alanine--D-alanine ligase of Anaeromyxobacter dehalogenans (strain 2CP-1 / ATCC BAA-258).